The primary structure comprises 833 residues: MEEVKKYGKTLEEIEGGLMFDDFPESLVDSDEDHNIFDDEFDAANDETFGGGLDNIGENAELENYATQTAKLRFDDPVWQKPSSSDHVAPSASEIPIPFPNFGNGDASDSFKSSFEAESPFLKKSIWGNGTDGAYNIWGTNFGISSVPAAPTLDLDFGALLPTPTIQATKEVKSSQIPSMPSSALTLEDCERMQMGNKPDSLVDAFKDLQLGSTPVQPQSAQFSKHPLEARIAAPGTPATASSQALPTLPTAALSLEELELQIMKEAQILKGRQQVPSDMREDNKFSHPPPGFNQNVQPRMDPSLSPGGMHGMPPSMGTSMPHMGPMMPPQNMQLPRLPPLNPQFLPLIPVWFNAIINNIQLPMGVPPPPPFLFQLLNHYRNPQLVHAMIMQSSIPPNIRQNGPQFSHPSGPHSPGNRVQRKHSGMPSTRTIYDLALDSFAGYMSYKEREWLIRIQFIQCKGSGDPQVDDYYYVTWRDKQIANGWTAETKLEEATKEKKEKSSESQKDYLERISRMNYREMQKERARERDKERQRERQERIDRGEDKKLRQTLSDKFATSLGLPSKSSTHNPRHVLDMKAQVESVDNQTKKLSDEERKIAVAKKLRTMLLRLEGALNILMEVDELRRSSLPEKSQFKDLSSDEKDQEVEKRTTVIINELMGDDLSKLMQMSKGRAVITRTLKVVEPRDQARIILALMTAGGLVSKKMYGEIVLDILPVVYQKVSNLHPDQFKYLVGALNLDTLKRQLLDSNMFIRDMMMTLFFVSVKNNQQLVEWAKATKFSSLKMPSSAPLSIWRKALSVISDSEIKEFADDIKYSGIVDCHDVAQLIEQSL.

Disordered stretches follow at residues 279 to 313 (DMRE…MHGM), 398 to 427 (NIRQ…SGMP), and 492 to 549 (EEAT…DKKL). A compositionally biased stretch (low complexity) spans 303–313 (PSLSPGGMHGM). The segment covering 398 to 408 (NIRQNGPQFSH) has biased composition (polar residues).

This sequence belongs to the PAT1 family.

Its subcellular location is the cytoplasm. The protein resides in the P-body. RNA-binding protein involved in deadenylation-dependent decapping of mRNAs, leading to the degradation of mRNAs. Acts as a scaffold protein that connects deadenylation and decapping machinery. Required for the recruitment of P-body components such as cgh-1 in somatic blastomeres. May play a role in recruiting the decapping enzyme dcap-1 to cytoplasmic puncta in the cell body of the posterior touch receptor neuron, PLM. The polypeptide is Protein PAT1 homolog 1 (Caenorhabditis elegans).